We begin with the raw amino-acid sequence, 318 residues long: Biotin synthase (318 aa).

In terms of domain architecture, Radical SAM core spans 44 to 270 (LCGDAVNLCS…INPTANIRLA (227 aa)). [4Fe-4S] cluster is bound by residues cysteine 62, cysteine 66, and cysteine 69. [2Fe-2S] cluster contacts are provided by serine 106, cysteine 138, cysteine 198, and arginine 268.

Belongs to the radical SAM superfamily. Biotin synthase family. Homodimer. Requires [4Fe-4S] cluster as cofactor. [2Fe-2S] cluster serves as cofactor.

It catalyses the reaction (4R,5S)-dethiobiotin + (sulfur carrier)-SH + 2 reduced [2Fe-2S]-[ferredoxin] + 2 S-adenosyl-L-methionine = (sulfur carrier)-H + biotin + 2 5'-deoxyadenosine + 2 L-methionine + 2 oxidized [2Fe-2S]-[ferredoxin]. It functions in the pathway cofactor biosynthesis; biotin biosynthesis; biotin from 7,8-diaminononanoate: step 2/2. Functionally, catalyzes the conversion of dethiobiotin (DTB) to biotin by the insertion of a sulfur atom into dethiobiotin via a radical-based mechanism. In Alkaliphilus metalliredigens (strain QYMF), this protein is Biotin synthase.